A 646-amino-acid polypeptide reads, in one-letter code: Beta-mannosyltransferase 6 (646 aa).

At 1–25 the chain is on the cytoplasmic side; it reads MGNYKPSIKQYVVTVKAIKSSQFGR. Residues 26–46 traverse the membrane as a helical segment; the sequence is LGICAVVLLFVLGYPFYFISN. The Extracellular portion of the chain corresponds to 47 to 646; the sequence is NPFDTSIRYQ…LTGGWLPSHN (600 aa). N-linked (GlcNAc...) asparagine glycans are attached at residues Asn62, Asn81, Asn103, Asn117, Asn127, Asn132, Asn146, Asn334, and Asn393.

It belongs to the BMT family.

The protein localises to the membrane. Functionally, beta-mannosyltransferase involved in cell wall biosynthesis. Required for beta-1,2-mannose transfer on phospholipomannan. Required for pro-inflammatory response in macrophages through phospholipomannan-induced TNF-alpha production. This Candida albicans (strain SC5314 / ATCC MYA-2876) (Yeast) protein is Beta-mannosyltransferase 6 (BMT6).